A 140-amino-acid polypeptide reads, in one-letter code: Fluoride-specific ion channel FluC 1 (140 aa).

Transmembrane regions (helical) follow at residues 45–65 (IPSLLGTFIVNVLGCIAIGFL), 82–102 (FLGAGLIGSFTTFSAFATQTI), and 106–126 (LFYGIIFIAANILCGLMGVFI). 2 residues coordinate Na(+): glycine 89 and threonine 92.

It belongs to the fluoride channel Fluc/FEX (TC 1.A.43) family.

It is found in the cell membrane. The enzyme catalyses fluoride(in) = fluoride(out). With respect to regulation, na(+) is not transported, but it plays an essential structural role and its presence is essential for fluoride channel function. Its function is as follows. Fluoride-specific ion channel. Important for reducing fluoride concentration in the cell, thus reducing its toxicity. The polypeptide is Fluoride-specific ion channel FluC 1 (Methanospirillum hungatei JF-1 (strain ATCC 27890 / DSM 864 / NBRC 100397 / JF-1)).